Reading from the N-terminus, the 117-residue chain is MGWSCIILFLVATATGVHSQVQLQQPGAELVRPGSSVKLSCKASGYTFTSYWMDWVKQRPGQGLEWIGNIYPSDSETHYNQKFKDKATLTVDKSSSTAYMQLSSLTSEDSAVYYCAR.

The first 19 residues, 1-19 (MGWSCIILFLVATATGVHS), serve as a signal peptide directing secretion. Positions 20–49 (QVQLQQPGAELVRPGSSVKLSCKASGYTFT) are framework-1. A disulfide bridge connects residues cysteine 41 and cysteine 115. Positions 50 to 54 (SYWMD) are complementarity-determining-1. Residues 55–68 (WVKQRPGQGLEWIG) are framework-2. The interval 69–85 (NIYPSDSETHYNQKFKD) is complementarity-determining-2. A framework-3 region spans residues 86 to 117 (KATLTVDKSSSTAYMQLSSLTSEDSAVYYCAR).

The sequence is that of Ig heavy chain V region 3 (Ighv1-61) from Mus musculus (Mouse).